A 450-amino-acid polypeptide reads, in one-letter code: Chromosomal replication initiator protein DnaA (450 aa).

The tract at residues 1–84 (MENIHDLWDR…AVKFIIPPNQ (84 aa)) is domain I, interacts with DnaA modulators. The interval 84-111 (QADEKLELPSSAKKQRKPYEEANDFPQS) is domain II. The segment at 112–328 (MLNPKYTFDT…GALIRVVAYS (217 aa)) is domain III, AAA+ region. ATP-binding residues include Gly-156, Gly-158, Lys-159, and Thr-160. The domain IV, binds dsDNA stretch occupies residues 329-450 (SLINKEITAD…KEIQEKLKQL (122 aa)).

Belongs to the DnaA family. Oligomerizes as a right-handed, spiral filament on DNA at oriC.

It is found in the cytoplasm. Its function is as follows. Plays an essential role in the initiation and regulation of chromosomal replication. ATP-DnaA binds to the origin of replication (oriC) to initiate formation of the DNA replication initiation complex once per cell cycle. Binds the DnaA box (a 9 base pair repeat at the origin) and separates the double-stranded (ds)DNA. Forms a right-handed helical filament on oriC DNA; dsDNA binds to the exterior of the filament while single-stranded (ss)DNA is stabiized in the filament's interior. The ATP-DnaA-oriC complex binds and stabilizes one strand of the AT-rich DNA unwinding element (DUE), permitting loading of DNA polymerase. After initiation quickly degrades to an ADP-DnaA complex that is not apt for DNA replication. Binds acidic phospholipids. This Geobacillus thermodenitrificans (strain NG80-2) protein is Chromosomal replication initiator protein DnaA.